Reading from the N-terminus, the 857-residue chain is Linoleate 9S-lipoxygenase 6 (857 aa).

Positions 26-156 constitute a PLAT domain; it reads NALDFTDLAG…RYKSDRIFFA (131 aa). Residues 159 to 857 form the Lipoxygenase domain; that stretch reads PYLPSETPEL…GKGIPNSVSI (699 aa). The tract at residues 205–243 is disordered; the sequence is NPDQGEQNVRTTLGGSADYPYPRRGRTGRPPTRTDPKSE. Positions 208 to 218 are enriched in polar residues; that stretch reads QGEQNVRTTLG. Residues His518, His523, His709, Asn713, and Ile857 each contribute to the Fe cation site.

This sequence belongs to the lipoxygenase family. In terms of assembly, monomer. Fe cation is required as a cofactor. Expressed in tubers and roots. Detected in leaves, petioles and stems.

It localises to the cytoplasm. It carries out the reaction (9Z,12Z)-octadecadienoate + O2 = (9S)-hydroperoxy-(10E,12Z)-octadecadienoate. It participates in lipid metabolism; oxylipin biosynthesis. Functionally, plant lipoxygenases may be involved in a number of diverse aspects of plant physiology including growth and development, pest resistance, and senescence or responses to wounding. Catalyzes the hydroperoxidation of lipids containing a cis,cis-1,4-pentadiene structure. Linoleic and linolenic acids are the preferred substrates, but is also active with arachidonic acid. The products are almost exclusively the S enantiomers. The protein is Linoleate 9S-lipoxygenase 6 (LOX1.6) of Solanum tuberosum (Potato).